A 56-amino-acid chain; its full sequence is uncharacterized protein (56 aa).

A helical membrane pass occupies residues 2–22 (ILYIIVAISILLNIILGIKVI).

It is found in the membrane. This is an uncharacterized protein from Methanocaldococcus jannaschii (strain ATCC 43067 / DSM 2661 / JAL-1 / JCM 10045 / NBRC 100440) (Methanococcus jannaschii).